The following is an 834-amino-acid chain: Glycerol-3-phosphate acyltransferase (834 aa).

An HXXXXD motif motif is present at residues 309-314; sequence CHRSHI.

Belongs to the GPAT/DAPAT family.

The protein localises to the cell inner membrane. It catalyses the reaction sn-glycerol 3-phosphate + an acyl-CoA = a 1-acyl-sn-glycero-3-phosphate + CoA. It participates in phospholipid metabolism; CDP-diacylglycerol biosynthesis; CDP-diacylglycerol from sn-glycerol 3-phosphate: step 1/3. The chain is Glycerol-3-phosphate acyltransferase from Pseudomonas fluorescens (strain Pf0-1).